A 245-amino-acid polypeptide reads, in one-letter code: tRNA (guanine-N(1)-)-methyltransferase (245 aa).

Residues Gly111 and 131–136 (MGDYVL) contribute to the S-adenosyl-L-methionine site.

It belongs to the RNA methyltransferase TrmD family. In terms of assembly, homodimer.

The protein resides in the cytoplasm. The catalysed reaction is guanosine(37) in tRNA + S-adenosyl-L-methionine = N(1)-methylguanosine(37) in tRNA + S-adenosyl-L-homocysteine + H(+). Functionally, specifically methylates guanosine-37 in various tRNAs. In Staphylococcus aureus (strain USA300), this protein is tRNA (guanine-N(1)-)-methyltransferase.